Here is a 2145-residue protein sequence, read N- to C-terminus: MADELARIQQYEYRQNSNLVLSVDYNLTDRRGREEPTGEVLPITDKEMRKMKMGDRAIKGKAPVQDQKKKRKKKDDEKAQQFGRNVLVDNNELMGAYKPRTQETKQTYEVILSFILDALGDVPREVLCGAADEVLLTLKNDKFRDKEKKKEVEALLGPLTDDRIAVLINLSKKISDFSIEEENKPEGDGDIYENEGVNVQFDSDEEEDDGGMVNEIKGDSEEESEEEEGVDTDYTATLKGDGHLTEDEQKARGILHPRDIDAHWIQRSLAKYFKDPLIAQQKQTEVIGILKNAADDRDAENQLVLLLGFDQFEFIKCLRQNRLMILYCTLLRQANEKERLQIEDDMRSRPELHPILALLQETDEGSVVQVEKSKRDAEKSKKAATAANEAISAGQWQAGRKMLDLNDLTFSQGSHLMSNKRCELPDGSYRRQKKSYEEIHVPALKPRPFAEGEKLVSVSELPKWAQPAFDGYKSLNRIQSRLCDSALRSKEHLLLCAPTGAGKTNVALLTMLQEIGNHLAEDGSVKLDEFKIVYIAPMKSLVQEMVGSFSKRLAPFGITVGEMTGDAQMSKEQFMATQVIVCTPEKYDVVTRKGGERAYNQMVRLLIIDEIHLLHDDRGPVLESIVVRTIRQMEQNHDECRLVGLSATLPNYQDVATFLRVKPEHLHFFDNSYRPVPLEQQYIGVTEKKALKRFQAMNEVVYDKIMEHAGKSQVLVFVHSRKETAKTAKAIRDACLEKDTLSAFMREGSASTEILRTEAEQAKNLDLKDLLPYGFAIHHAGMNRVDRTLVEDLFADRHIQVLFSTATLAWGVNLPAHTVIIKGTQIYNPEKGRWTELGALDIMQMLGRAGRPQYDDRGEGILITNHSELQYYLSLMNQQLPVESQMVSRLTDMLNAEVVLGTVSSVSEATNWLGYTFLFVRMLKNPTLYGITHEQARADPLLEQRRADLIHTACVLLDKAGLIKYDKRSGIIQATELGRIASHFYCTYESMQTYNKLLVETCSDIDLFRIFSMSSEFKLLSVRDEEKLELQKMAEHAPIPIKENLDEASAKTNVLLQAYISQLKLEGFALQADMVFVAQSAGRLFRALFEIVLWRGWAGLAQKVLTLCKMVTQRQWGSLNPLHQFKKIPSEVVRSIDKKNYSFDRLYDLDQHQLGDLIKMPKMGKPLFKFIRQFPKLEMTTLIQPITRTTMRIELTITPDFKWDEKVHGSAEGFWIFIEDTDGEKILHHEFFLLKQKFCSDEHVVKMIVPMFDPMPPLYYVRIVSDRWIGAETVLPISFRHLILPEKYPPPTELLDLQPLPISAVTNKEFQTVFAESGFKVFNPIQTQVFRTVFESNENVIVCAPNGSGKTAIAELAVLRHFENTPEAKAVYITPMEDMATKVYADWKRRLEPAIGHTIVLLTGEQTMDLKLAQRGQLIISTPERWDNISRRWKQRKSVQNVKLFIADDLHMIGASNGAVFEVVCSRTRYISSQLESAVRVVALSSSLTNARDLGMWLGCSASATFNFMPSTRPVPLDLEIKSFNLSHNASRFAAMERPVYQAICRHAGKLEPKPALVFVPVRRQTRPVAVALLTMALADGAPKRFLRLAEHDDTFQALLADIEDESLRESVSCGVGFLHEGTAPKDVHIVQQLFESNAIQVCVVPRGMCYQIEMSAYLVVVMDTQFYNGKYHVYEDYPIADMLHMVGLANRPILDSDAKCVVMCQTSKRAYYKKFLCDPLPVESHLDHCLHDHFNAEIVTKTIENKQDAIDYLTWTLLYRRMTQNPNYYNLQGTTHRHLSDALSELVELTLKDLENSKCIAVKDEMDTVSLNLGMIASYYYISYQTIELFSMSLKEKTKTRALIEIISASSEFGNVPMRHKEDVILRQLAERLPGQLKNQKFTDPHVKVNLLIHAHLSRVKLTAELNKDTELIVLRACRLVQACVDVLSSNGWLSPAIHAMELSQMLTQAMYSNEPYLKQLPHCSAALLERAKAKEVTSVFELLELENDDRSDILQMEGAELADVARFCNHYPSIEVATELENDVVTSNDNLMLAVSLERDNDIDGLAPPVVAPLFPQKRKEEGWWLVIGDSESNALLTIKRLVINEKSSVQLDFAAPRPGHHKFKLFFISDSYLGADQEFDVAFKVEEPGRSNRKRKHEKEED.

2 disordered regions span residues 54–82 (GDRA…AQQF) and 202–243 (DSDE…GDGH). The segment covering 220–231 (SEEESEEEEGVD) has biased composition (acidic residues). The 184-residue stretch at 484-667 (DSALRSKEHL…FLRVKPEHLH (184 aa)) folds into the Helicase ATP-binding 1 domain. 497–504 (APTGAGKT) lines the ATP pocket. Residues 609 to 612 (DEIH) carry the DEAH box motif. One can recognise a Helicase C-terminal domain in the interval 677 to 894 (PLEQQYIGVT…QMVSRLTDML (218 aa)). The SEC63 1 domain occupies 975–1278 (TELGRIASHF…IGAETVLPIS (304 aa)). A Helicase ATP-binding 2 domain is found at 1331–1506 (RTVFESNENV…WLGCSASATF (176 aa)). Position 1344 to 1351 (1344 to 1351 (APNGSGKT)) interacts with ATP. A DEAH box motif is present at residues 1448–1451 (DDLH). In terms of domain architecture, SEC63 2 spans 1812 to 2124 (LNLGMIASYY…YLGADQEFDV (313 aa)).

Belongs to the helicase family. SKI2 subfamily.

It is found in the nucleus. The enzyme catalyses ATP + H2O = ADP + phosphate + H(+). Functionally, catalyzes the ATP-dependent unwinding of U4/U6 RNA duplices, an essential step in the assembly of a catalytically active spliceosome. Plays a role in pre-mRNA splicing. In Caenorhabditis elegans, this protein is U5 small nuclear ribonucleoprotein 200 kDa helicase.